The following is a 901-amino-acid chain: Mediator of RNA polymerase II transcription subunit 14 (901 aa).

It belongs to the Mediator complex subunit 14 family. Component of the Mediator complex.

It is found in the nucleus. Functionally, component of the Mediator complex, a coactivator involved in the regulated transcription of nearly all RNA polymerase II-dependent genes. Mediator functions as a bridge to convey information from gene-specific regulatory proteins to the basal RNA polymerase II transcription machinery. Mediator is recruited to promoters by direct interactions with regulatory proteins and serves as a scaffold for the assembly of a functional preinitiation complex with RNA polymerase II and the general transcription factors. The protein is Mediator of RNA polymerase II transcription subunit 14 (RGR1) of Yarrowia lipolytica (strain CLIB 122 / E 150) (Yeast).